Here is a 446-residue protein sequence, read N- to C-terminus: Phosphoglucosamine mutase (446 aa).

S102 functions as the Phosphoserine intermediate in the catalytic mechanism. Mg(2+) is bound by residues S102, D241, D243, and D245. S102 is subject to Phosphoserine.

It belongs to the phosphohexose mutase family. Mg(2+) serves as cofactor. In terms of processing, activated by phosphorylation.

It carries out the reaction alpha-D-glucosamine 1-phosphate = D-glucosamine 6-phosphate. Its function is as follows. Catalyzes the conversion of glucosamine-6-phosphate to glucosamine-1-phosphate. The polypeptide is Phosphoglucosamine mutase (Yersinia pseudotuberculosis serotype O:1b (strain IP 31758)).